The following is a 233-amino-acid chain: 7-cyano-7-deazaguanine synthase (233 aa).

8–18 (FSGGQDSTTCL) is an ATP binding site. 4 residues coordinate Zn(2+): Cys188, Cys197, Cys200, and Cys203.

This sequence belongs to the QueC family. Zn(2+) serves as cofactor.

The enzyme catalyses 7-carboxy-7-deazaguanine + NH4(+) + ATP = 7-cyano-7-deazaguanine + ADP + phosphate + H2O + H(+). Its pathway is purine metabolism; 7-cyano-7-deazaguanine biosynthesis. Its function is as follows. Catalyzes the ATP-dependent conversion of 7-carboxy-7-deazaguanine (CDG) to 7-cyano-7-deazaguanine (preQ(0)). The protein is 7-cyano-7-deazaguanine synthase of Klebsiella pneumoniae (strain 342).